Here is an 80-residue protein sequence, read N- to C-terminus: Small ribosomal subunit protein uS17 (80 aa).

Belongs to the universal ribosomal protein uS17 family. As to quaternary structure, part of the 30S ribosomal subunit.

Its function is as follows. One of the primary rRNA binding proteins, it binds specifically to the 5'-end of 16S ribosomal RNA. The polypeptide is Small ribosomal subunit protein uS17 (Cereibacter sphaeroides (strain ATCC 17025 / ATH 2.4.3) (Rhodobacter sphaeroides)).